Consider the following 215-residue polypeptide: Octanoyltransferase (215 aa).

Positions 31–206 (PDSQDEIWLV…QLVKHLDYAE (176 aa)) constitute a BPL/LPL catalytic domain. Substrate-binding positions include 70–77 (RGGQVTYH), 137–139 (SLG), and 150–152 (GLA). The active-site Acyl-thioester intermediate is the cysteine 168.

It belongs to the LipB family.

It is found in the cytoplasm. The catalysed reaction is octanoyl-[ACP] + L-lysyl-[protein] = N(6)-octanoyl-L-lysyl-[protein] + holo-[ACP] + H(+). The protein operates within protein modification; protein lipoylation via endogenous pathway; protein N(6)-(lipoyl)lysine from octanoyl-[acyl-carrier-protein]: step 1/2. Its function is as follows. Catalyzes the transfer of endogenously produced octanoic acid from octanoyl-acyl-carrier-protein onto the lipoyl domains of lipoate-dependent enzymes. Lipoyl-ACP can also act as a substrate although octanoyl-ACP is likely to be the physiological substrate. This chain is Octanoyltransferase, found in Pseudomonas putida (strain ATCC 700007 / DSM 6899 / JCM 31910 / BCRC 17059 / LMG 24140 / F1).